We begin with the raw amino-acid sequence, 144 residues long: ASVTFWTLDNVDRTLVFTGNPGSAAIETITVGPAENTTVEFPGSWVGNWYAYPTDAEDVPGMLGEVQFGGWNGLTYFDVSAIVNPTDHDNVKQMWPAESRKPMSGCEVFPCDNAYWLPDDIQTKVTHEVDLWTTLGAGSTGLTF.

N-linked (GlcNAc...) asparagine glycosylation is present at N36. The interval 91–105 is igE-binding epitope; sequence VKQMWPAESRKPMSG.

As to quaternary structure, homodimer. Requires Mg(2+) as cofactor.

It is found in the secreted. Functionally, has exodeoxyribonuclease activity with lambda-DNA and salmon testes dsDNA. No activity with circular plasmid DNA. The physiological role of this enzyme may be to degrade environmental DNA, and thus mobilize nitrogen for uptake. This is Antigenic protein SchS21 from Stachybotrys chartarum (Toxic black mold).